A 487-amino-acid chain; its full sequence is PPE family protein PPE10 (487 aa).

Residues 398-424 (APVGGLDSGNPNPGSGSAAAGSGANPG) show a composition bias toward low complexity. A disordered region spans residues 398-487 (APVGGLDSGN…PRIGQPVGSE (90 aa)). The segment covering 428–446 (PGTSYPSFVNSGSNDSGLR) has biased composition (polar residues).

Belongs to the mycobacterial PPE family.

It localises to the secreted. Plays a major role in the integrity and stability of the capsule. This chain is PPE family protein PPE10 (PPE10), found in Mycobacterium tuberculosis (strain CDC 1551 / Oshkosh).